A 61-amino-acid chain; its full sequence is Large ribosomal subunit protein bL28 (61 aa).

Residues 1-26 (MAKDYVTGKRTHFGNTRSHALNHSRR) form a disordered region.

This sequence belongs to the bacterial ribosomal protein bL28 family.

The sequence is that of Large ribosomal subunit protein bL28 from Lactiplantibacillus plantarum (strain ATCC BAA-793 / NCIMB 8826 / WCFS1) (Lactobacillus plantarum).